Here is a 534-residue protein sequence, read N- to C-terminus: Peptide chain release factor 3 (534 aa).

Positions 9–278 (ARRRTFAIIS…FFVEHAPSPQ (270 aa)) constitute a tr-type G domain. Residues 18–25 (SHPDAGKT), 86–90 (DTPGH), and 140–143 (NKLD) each bind GTP.

It belongs to the TRAFAC class translation factor GTPase superfamily. Classic translation factor GTPase family. PrfC subfamily.

The protein localises to the cytoplasm. Increases the formation of ribosomal termination complexes and stimulates activities of RF-1 and RF-2. It binds guanine nucleotides and has strong preference for UGA stop codons. It may interact directly with the ribosome. The stimulation of RF-1 and RF-2 is significantly reduced by GTP and GDP, but not by GMP. This is Peptide chain release factor 3 from Xylella fastidiosa (strain M12).